We begin with the raw amino-acid sequence, 886 residues long: DNA double-strand break repair Rad50 ATPase (886 aa).

ATP contacts are provided by residues 32–38 (NGAGKSS) and glutamine 137. 2 coiled-coil regions span residues 181–240 (IRSL…KEIK) and 320–416 (RKKE…GDLN). Residues 391–489 (IKDVSDRINQ…EREELEATRN (99 aa)) form the Zinc-hook domain. Zn(2+)-binding residues include cysteine 437 and cysteine 440. Coiled coils occupy residues 450 to 657 (AKIR…ISEL) and 682 to 718 (EADK…EESK).

The protein belongs to the SMC family. RAD50 subfamily. Homodimer. Forms a heterotetramer composed of two Mre11 subunits and two Rad50 subunits. Interacts with Mre11 and HerA. Requires Zn(2+) as cofactor.

In terms of biological role, part of the Rad50/Mre11 complex, which is involved in the early steps of DNA double-strand break (DSB) repair. The complex may facilitate opening of the processed DNA ends to aid in the recruitment of HerA and NurA. Rad50 controls the balance between DNA end bridging and DNA resection via ATP-dependent structural rearrangements of the Rad50/Mre11 complex. In Sulfolobus acidocaldarius (strain ATCC 33909 / DSM 639 / JCM 8929 / NBRC 15157 / NCIMB 11770), this protein is DNA double-strand break repair Rad50 ATPase.